Consider the following 1251-residue polypeptide: Immunoglobulin-like and fibronectin type III domain-containing protein 1 (1251 aa).

An Ig-like 1 domain is found at 29–119 (PDFEQKPVTS…GEAACSVRLT (91 aa)). The tract at residues 61–81 (RWQNSKGDLSDSSKYKISSSP) is disordered. The stretch at 188–221 (IVDYRGMLRRLQEMKKEQEDKMAQYINTISSLRH) forms a coiled coil. Residues 309 to 398 (PRVVVPLAET…SSAWLVVEAG (90 aa)) form the Ig-like 2 domain. The segment covering 403–433 (LQSTSADHKLQSRRSGKDGRLDIYGERRDAT) has biased composition (basic and acidic residues). Positions 403 to 454 (LQSTSADHKLQSRRSGKDGRLDIYGERRDATRSSTSRYKPGTGSFSKDAQGP) are disordered. Residues 434–449 (RSSTSRYKPGTGSFSK) are compositionally biased toward polar residues. An Ig-like 3 domain is found at 454-539 (PMGHFSQGLA…GDQQSEATLT (86 aa)). Fibronectin type-III domains are found at residues 646–741 (PPQG…VAPE), 746–845 (APSA…MRPP), and 847–942 (LVRN…AMPV). The Ig-like 4 domain occupies 946-1030 (PKFLVDSSTK…LRTLQGKEVA (85 aa)). Residues 1043 to 1137 (APGPIHLQEN…TSQPWCIPRQ (95 aa)) enclose the Fibronectin type-III 4 domain. One can recognise an Ig-like 5 domain in the interval 1151 to 1245 (PDLSQKPRFL…GQAVSTATLI (95 aa)).

Interacts with FLNC. Interacts with KY. Expressed in skeletal muscle.

The protein resides in the nucleus. It is found in the cytoplasm. It localises to the myofibril. The protein localises to the sarcomere. Its subcellular location is the z line. The sequence is that of Immunoglobulin-like and fibronectin type III domain-containing protein 1 (IGFN1) from Homo sapiens (Human).